Here is a 283-residue protein sequence, read N- to C-terminus: S-adenosylmethionine mitochondrial carrier protein homolog (283 aa).

Solcar repeat units follow at residues 11–84, 93–178, and 187–275; these read LKFF…GKQF, DSPY…FKLQ, and STPF…TTRI. 6 consecutive transmembrane segments (helical) span residues 14-34, 55-75, 99-119, 152-172, 190-210, and 248-268; these read FHALVAGGVAGMVVDIALFPI, GIYKGLAPAAAGSAPTAALFF, MAAASAAEVLACLIRVPVEIA, RGFGSTIMREIPFSLIQFPLW, FSVALCGAVAGGISAGLTTPL, and FAGFVPRVLWITLGGAFFFGF.

This sequence belongs to the mitochondrial carrier (TC 2.A.29) family.

It is found in the mitochondrion inner membrane. Its function is as follows. Mitochondrial solute carriers shuttle metabolites, nucleotides, and cofactors through the mitochondrial inner membrane. May mediate the transport of S-adenosylmethionine (SAM) into the mitochondria. In Drosophila melanogaster (Fruit fly), this protein is S-adenosylmethionine mitochondrial carrier protein homolog.